The primary structure comprises 490 residues: Tandem C2 domains nuclear protein (490 aa).

Phosphoserine is present on residues serine 83, serine 156, serine 168, serine 174, and serine 211. The segment at 189–215 (HDSLSSVPSSSSSRKNSQGSNRSLDTI) is disordered. The segment covering 192–211 (LSSVPSSSSSRKNSQGSNRS) has biased composition (low complexity). Residues threonine 214 and threonine 216 each carry the phosphothreonine modification. Residue serine 218 is modified to Phosphoserine. 2 C2 domains span residues 223–342 (DFGR…SLDI) and 344–471 (PPSK…NQWK). Residues 447–449 (RRK) carry the Nuclear localization signal motif.

The protein localises to the nucleus. The sequence is that of Tandem C2 domains nuclear protein (TC2N) from Homo sapiens (Human).